We begin with the raw amino-acid sequence, 87 residues long: Small ribosomal subunit protein bS20 (87 aa).

Residues 1–22 (MAHHKSALKRIKQNKRKQFRNK) form a disordered region.

This sequence belongs to the bacterial ribosomal protein bS20 family.

Its function is as follows. Binds directly to 16S ribosomal RNA. The polypeptide is Small ribosomal subunit protein bS20 (Geobacter metallireducens (strain ATCC 53774 / DSM 7210 / GS-15)).